The primary structure comprises 269 residues: MPELPEVEVSRMGISPHMVGQTIKAFVFRTPKLRWDIPQELKLLEGQVIRNIRRRAKYLLIDTDQGTAIVHLGMSGSLRVLDADFPAAKHDHVDLKLTNGKVLRYNDPRRFGAWLWCAPGESHAVLEHMGPEPLTDAFNSEYIADKAQGKRVAVKQFIMDNKVVVGVGNIYANESLFKSRILPTRQAGQVTPQEWVLLVENIKATLKIAINQGGTTLKDFAQADGKPGYFAQELLVYGKAGEPCPECGEPLQELKIGQRNTFFCNECQQ.

P2 serves as the catalytic Schiff-base intermediate with DNA. E3 functions as the Proton donor in the catalytic mechanism. Catalysis depends on K57, which acts as the Proton donor; for beta-elimination activity. DNA contacts are provided by H90, R109, and K150. The FPG-type zinc finger occupies 235–269 (LVYGKAGEPCPECGEPLQELKIGQRNTFFCNECQQ). R259 serves as the catalytic Proton donor; for delta-elimination activity.

It belongs to the FPG family. In terms of assembly, monomer. It depends on Zn(2+) as a cofactor.

It catalyses the reaction Hydrolysis of DNA containing ring-opened 7-methylguanine residues, releasing 2,6-diamino-4-hydroxy-5-(N-methyl)formamidopyrimidine.. The catalysed reaction is 2'-deoxyribonucleotide-(2'-deoxyribose 5'-phosphate)-2'-deoxyribonucleotide-DNA = a 3'-end 2'-deoxyribonucleotide-(2,3-dehydro-2,3-deoxyribose 5'-phosphate)-DNA + a 5'-end 5'-phospho-2'-deoxyribonucleoside-DNA + H(+). Its function is as follows. Involved in base excision repair of DNA damaged by oxidation or by mutagenic agents. Acts as a DNA glycosylase that recognizes and removes damaged bases. Has a preference for oxidized purines, such as 7,8-dihydro-8-oxoguanine (8-oxoG). Has AP (apurinic/apyrimidinic) lyase activity and introduces nicks in the DNA strand. Cleaves the DNA backbone by beta-delta elimination to generate a single-strand break at the site of the removed base with both 3'- and 5'-phosphates. The protein is Formamidopyrimidine-DNA glycosylase of Vibrio parahaemolyticus serotype O3:K6 (strain RIMD 2210633).